Reading from the N-terminus, the 257-residue chain is NAD-capped RNA hydrolase NudC (257 aa).

Residue Arg-69 participates in substrate binding. The Zn(2+) site is built by Cys-98 and Cys-101. Residue Glu-111 participates in substrate binding. Residues Cys-116 and Cys-119 each coordinate Zn(2+). Tyr-124 provides a ligand contact to substrate. The region spanning 125–248 (PQIAPCIIVA…TVARRLIEDT (124 aa)) is the Nudix hydrolase domain. The a divalent metal cation site is built by Ala-158, Glu-174, and Glu-178. Positions 159-180 (GFVEVGETLEQAVAREVMEESG) match the Nudix box motif. 192–199 (QPWPFPQS) contacts substrate. An a divalent metal cation-binding site is contributed by Glu-219. Residue Ala-241 coordinates substrate.

The protein belongs to the Nudix hydrolase family. NudC subfamily. As to quaternary structure, homodimer. Mg(2+) is required as a cofactor. The cofactor is Mn(2+). Requires Zn(2+) as cofactor.

It carries out the reaction a 5'-end NAD(+)-phospho-ribonucleoside in mRNA + H2O = a 5'-end phospho-adenosine-phospho-ribonucleoside in mRNA + beta-nicotinamide D-ribonucleotide + 2 H(+). It catalyses the reaction NAD(+) + H2O = beta-nicotinamide D-ribonucleotide + AMP + 2 H(+). The enzyme catalyses NADH + H2O = reduced beta-nicotinamide D-ribonucleotide + AMP + 2 H(+). MRNA decapping enzyme that specifically removes the nicotinamide adenine dinucleotide (NAD) cap from a subset of mRNAs by hydrolyzing the diphosphate linkage to produce nicotinamide mononucleotide (NMN) and 5' monophosphate mRNA. The NAD-cap is present at the 5'-end of some mRNAs and stabilizes RNA against 5'-processing. Has preference for mRNAs with a 5'-end purine. Catalyzes the hydrolysis of a broad range of dinucleotide pyrophosphates. This chain is NAD-capped RNA hydrolase NudC, found in Klebsiella pneumoniae (strain 342).